Consider the following 65-residue polypeptide: Muscarinic toxin-like protein 2 (65 aa).

4 cysteine pairs are disulfide-bonded: C3-C24, C17-C42, C46-C57, and C58-C63.

This sequence belongs to the three-finger toxin family. Short-chain subfamily. Type C muscarinic toxin sub-subfamily. Monomer. In terms of tissue distribution, expressed by the venom gland.

The protein resides in the secreted. This is Muscarinic toxin-like protein 2 from Naja kaouthia (Monocled cobra).